A 157-amino-acid polypeptide reads, in one-letter code: Short-type peptidyl-prolyl cis-trans isomerase (157 aa).

Positions 1–95 (MINLIKKGDY…RDERLIQEIP (95 aa)) constitute a PPIase FKBP-type domain. The tract at residues 86–137 (RDERLIQEIPKEMFADADFEPQEGMLILASGIPAKIIKVTDDTVTLDFNHEL) is IF.

It belongs to the FKBP-type PPIase family.

The protein resides in the cytoplasm. The enzyme catalyses [protein]-peptidylproline (omega=180) = [protein]-peptidylproline (omega=0). Catalyzes the cis-trans isomerization of peptidyl prolyl bonds and accelerates protein folding. Also exhibits chaperone-like activity. This Methanocaldococcus jannaschii (strain ATCC 43067 / DSM 2661 / JAL-1 / JCM 10045 / NBRC 100440) (Methanococcus jannaschii) protein is Short-type peptidyl-prolyl cis-trans isomerase.